A 502-amino-acid polypeptide reads, in one-letter code: Maturase K (502 aa).

It belongs to the intron maturase 2 family. MatK subfamily.

It is found in the plastid. It localises to the chloroplast. Usually encoded in the trnK tRNA gene intron. Probably assists in splicing its own and other chloroplast group II introns. The polypeptide is Maturase K (Theobroma cacao (Cacao)).